The sequence spans 45 residues: Cytochrome b559 subunit beta (45 aa).

A helical transmembrane segment spans residues 20-36 (WLAVHTLAVPTVFFLGA). Histidine 24 contacts heme.

This sequence belongs to the PsbE/PsbF family. As to quaternary structure, heterodimer of an alpha subunit and a beta subunit. PSII is composed of 1 copy each of membrane proteins PsbA, PsbB, PsbC, PsbD, PsbE, PsbF, PsbH, PsbI, PsbJ, PsbK, PsbL, PsbM, PsbT, PsbX, PsbY, PsbZ, Psb30/Ycf12, peripheral proteins PsbO, CyanoQ (PsbQ), PsbU, PsbV and a large number of cofactors. It forms dimeric complexes. It depends on heme b as a cofactor.

The protein localises to the cellular thylakoid membrane. In terms of biological role, this b-type cytochrome is tightly associated with the reaction center of photosystem II (PSII). PSII is a light-driven water:plastoquinone oxidoreductase that uses light energy to abstract electrons from H(2)O, generating O(2) and a proton gradient subsequently used for ATP formation. It consists of a core antenna complex that captures photons, and an electron transfer chain that converts photonic excitation into a charge separation. The chain is Cytochrome b559 subunit beta from Trichormus variabilis (strain ATCC 29413 / PCC 7937) (Anabaena variabilis).